The chain runs to 157 residues: Small ribosomal subunit protein uS7 (157 aa).

It belongs to the universal ribosomal protein uS7 family. As to quaternary structure, part of the 30S ribosomal subunit. Contacts proteins S9 and S11.

One of the primary rRNA binding proteins, it binds directly to 16S rRNA where it nucleates assembly of the head domain of the 30S subunit. Is located at the subunit interface close to the decoding center, probably blocks exit of the E-site tRNA. This Paracidovorax citrulli (strain AAC00-1) (Acidovorax citrulli) protein is Small ribosomal subunit protein uS7.